The chain runs to 83 residues: MNFIQIAVLFVLVAVALARPQEDPANLPAPEAAAAPPAAAAAPPAAAAAPPAPPAPPAAAPQAAPAGGSGRKKNVNHNVITIG.

The first 18 residues, 1–18 (MNFIQIAVLFVLVAVALA), serve as a signal peptide directing secretion. The segment at 23-83 (DPANLPAPEA…NVNHNVITIG (61 aa)) is disordered. Residues 28-49 (PAPEAAAAPPAAAAAPPAAAAA) show a composition bias toward low complexity. The span at 50-59 (PPAPPAPPAA) shows a compositional bias: pro residues.

As to expression, adult male abdomen.

Its function is as follows. May be a male specific regulatory factor. The chain is Male-specific opa-containing protein (msopa) from Drosophila melanogaster (Fruit fly).